The sequence spans 202 residues: ATP-dependent Clp protease proteolytic subunit (202 aa).

Serine 101 (nucleophile) is an active-site residue. The active site involves histidine 126.

Belongs to the peptidase S14 family. Component of the chloroplastic Clp protease core complex.

It is found in the plastid. The protein localises to the chloroplast stroma. It catalyses the reaction Hydrolysis of proteins to small peptides in the presence of ATP and magnesium. alpha-casein is the usual test substrate. In the absence of ATP, only oligopeptides shorter than five residues are hydrolyzed (such as succinyl-Leu-Tyr-|-NHMec, and Leu-Tyr-Leu-|-Tyr-Trp, in which cleavage of the -Tyr-|-Leu- and -Tyr-|-Trp bonds also occurs).. Cleaves peptides in various proteins in a process that requires ATP hydrolysis. Has a chymotrypsin-like activity. Plays a major role in the degradation of misfolded proteins. The chain is ATP-dependent Clp protease proteolytic subunit from Calycanthus floridus var. glaucus (Eastern sweetshrub).